The following is an 879-amino-acid chain: Phosphoenolpyruvate carboxylase (879 aa).

Catalysis depends on residues H138 and K546.

Belongs to the PEPCase type 1 family. The cofactor is Mg(2+).

The enzyme catalyses oxaloacetate + phosphate = phosphoenolpyruvate + hydrogencarbonate. Forms oxaloacetate, a four-carbon dicarboxylic acid source for the tricarboxylic acid cycle. The polypeptide is Phosphoenolpyruvate carboxylase (Pectobacterium carotovorum subsp. carotovorum (strain PC1)).